The following is a 524-amino-acid chain: Chitinase D (524 aa).

The N-terminal stretch at 1-30 (MNQAVRFRPVITFALAFILIITWFAPRADA) is a signal peptide. One can recognise a Fibronectin type-III domain in the interval 95–180 (VPAGLTSSLV…TSLSVTTSTG (86 aa)). In terms of domain architecture, GH18 spans 190–514 (KWLIGYWHNF…NAHRPFLNGL (325 aa)). The Proton donor role is filled by Glu303.

Belongs to the glycosyl hydrolase 18 family. Chitinase class II subfamily.

The enzyme catalyses Random endo-hydrolysis of N-acetyl-beta-D-glucosaminide (1-&gt;4)-beta-linkages in chitin and chitodextrins.. This chain is Chitinase D (chiD), found in Niallia circulans (Bacillus circulans).